The sequence spans 126 residues: Ribosome-binding factor A (126 aa).

This sequence belongs to the RbfA family. Monomer. Binds 30S ribosomal subunits, but not 50S ribosomal subunits or 70S ribosomes.

The protein localises to the cytoplasm. Functionally, one of several proteins that assist in the late maturation steps of the functional core of the 30S ribosomal subunit. Associates with free 30S ribosomal subunits (but not with 30S subunits that are part of 70S ribosomes or polysomes). Required for efficient processing of 16S rRNA. May interact with the 5'-terminal helix region of 16S rRNA. In Azoarcus sp. (strain BH72), this protein is Ribosome-binding factor A.